The primary structure comprises 200 residues: Early E1A 21 kDa protein (200 aa).

Positions Gln78–Ser98 are disordered. Positions Leu114–Glu118 match the LXCXE motif, interaction with host RB1 motif. Residues Cys136 to Cys151 fold into a zinc finger. The Nuclear localization signal motif lies at Ser196–Glu200.

In terms of assembly, interaction with host RB1 induces the aberrant dissociation of RB1-E2F1 complex thereby disrupting RB1's activity.

Functionally, E1A protein has both transforming and trans-activating activities. Plays a role in viral genome replication by driving entry of quiescent cells into the cell cycle. Disrupts the function of host retinoblastoma protein RB1/pRb and isoform early E1A 26 kDa protein stabilizes TP53, which are key regulators of the cell cycle. Induces the disassembly of the E2F1 transcription factors from RB1 by direct competition for the same binding site on RB1, with subsequent transcriptional activation of E2F1-regulated S-phase genes. Inactivation of the ability of RB1 to arrest the cell cycle is critical for cellular transformation, uncontrolled cellular growth and proliferation induced by viral infection. Stimulation of progression from G1 to S phase allows the virus to efficiently use the cellular DNA replicating machinery to achieve viral genome replication. The chain is Early E1A 21 kDa protein from Murine adenovirus A serotype 1 (MAdV-1).